The primary structure comprises 424 residues: Neurotensin receptor type 1 (424 aa).

The Extracellular segment spans residues Met-1–Thr-67. N-linked (GlcNAc...) asparagine glycans are attached at residues Asn-4, Asn-38, and Asn-42. Residues Ala-68–Leu-88 traverse the membrane as a helical segment. The Cytoplasmic portion of the chain corresponds to Ala-89–His-102. A helical membrane pass occupies residues Tyr-103–Val-122. Residues Glu-123–Arg-142 are Extracellular-facing. A disulfide bridge connects residues Cys-141 and Cys-224. Residues Gly-143–Val-164 traverse the membrane as a helical segment. At Glu-165 to Arg-184 the chain is on the cytoplasmic side. The chain crosses the membrane as a helical span at residues Thr-185 to Phe-205. Residues Thr-206 to Lys-234 are Extracellular-facing. The N-linked (GlcNAc...) asparagine glycan is linked to Asn-211. Residues Val-235–Ile-259 form a helical membrane-spanning segment. At Ala-260 to Leu-308 the chain is on the cytoplasmic side. The chain crosses the membrane as a helical span at residues Val-309 to Met-330. The tract at residues Val-326–Tyr-349 is neurotensin binding. Topologically, residues Phe-331–His-348 are extracellular. A helical transmembrane segment spans residues Tyr-349–Tyr-369. The Cytoplasmic portion of the chain corresponds to Asn-370–Tyr-424. Residues Cys-386 and Cys-388 are each lipidated (S-palmitoyl cysteine). Residues Arg-398 to Tyr-424 form a disordered region. Residues Arg-403 to Tyr-424 show a composition bias toward polar residues.

This sequence belongs to the G-protein coupled receptor 1 family. Neurotensin receptor subfamily. NTSR1 sub-subfamily. Interacts (palmitoylated form) with GNA11. Post-translationally, N-glycosylated. Palmitoylated; this is required for normal localization at membrane rafts and normal GNA11-mediated activation of down-stream signaling cascades. The palmitoylation level increases in response to neurotensin treatment.

It localises to the cell membrane. The protein resides in the membrane raft. G-protein coupled receptor for the tridecapeptide neurotensin (NTS). Signaling is effected via G proteins that activate a phosphatidylinositol-calcium second messenger system. Signaling leads to the activation of downstream MAP kinases and protects cells against apoptosis. The chain is Neurotensin receptor type 1 (Ntsr1) from Mus musculus (Mouse).